Here is a 187-residue protein sequence, read N- to C-terminus: Protein GrpE (187 aa).

This sequence belongs to the GrpE family. As to quaternary structure, homodimer.

Its subcellular location is the cytoplasm. Participates actively in the response to hyperosmotic and heat shock by preventing the aggregation of stress-denatured proteins, in association with DnaK and GrpE. It is the nucleotide exchange factor for DnaK and may function as a thermosensor. Unfolded proteins bind initially to DnaJ; upon interaction with the DnaJ-bound protein, DnaK hydrolyzes its bound ATP, resulting in the formation of a stable complex. GrpE releases ADP from DnaK; ATP binding to DnaK triggers the release of the substrate protein, thus completing the reaction cycle. Several rounds of ATP-dependent interactions between DnaJ, DnaK and GrpE are required for fully efficient folding. The protein is Protein GrpE of Albidiferax ferrireducens (strain ATCC BAA-621 / DSM 15236 / T118) (Rhodoferax ferrireducens).